The chain runs to 267 residues: Interleukin-1 alpha (267 aa).

Positions 1–112 (MAKVPDLFED…DPEEGIIKPR (112 aa)) are excised as a propeptide. The N-linked (GlcNAc...) asparagine glycan is linked to Asn-64. Lys-82 is subject to N6-acetyllysine. Positions 82–86 (KKRRL) are nuclear localization signal (NLS). The residue at position 87 (Ser-87) is a Phosphoserine. Asn-100 and Asn-141 each carry an N-linked (GlcNAc...) asparagine glycan.

This sequence belongs to the IL-1 family. Monomer. Interacts with TMED10; the interaction mediates the translocation from the cytoplasm into the ERGIC (endoplasmic reticulum-Golgi intermediate compartment) and thereby secretion. Interacts with IL1R1. Interacts with S100A13; this interaction is the first step in the export of IL1A, followed by direct translocation of this complex across the plasma membrane. Post-translationally, acetylated within its nuclear localization sequence, which impacts subcellular localization. In terms of processing, proteolytic processed by CAPN1 in a calcium-dependent manner. Cleavage from 31 kDa precursor to 18 kDa biologically active molecules. Phosphorylated. Phosphorylation greatly enhances susceptibility to digestion and promotes the conversion of pre-IL1A alpha to the biologically active IL1A.

The protein localises to the nucleus. The protein resides in the cytoplasm. Its subcellular location is the secreted. Cytokine constitutively present intracellularly in nearly all resting non-hematopoietic cells that plays an important role in inflammation and bridges the innate and adaptive immune systems. After binding to its receptor IL1R1 together with its accessory protein IL1RAP, forms the high affinity interleukin-1 receptor complex. Signaling involves the recruitment of adapter molecules such as MYD88, IRAK1 or IRAK4. In turn, mediates the activation of NF-kappa-B and the three MAPK pathways p38, p42/p44 and JNK pathways. Within the cell, acts as an alarmin and cell death results in its liberation in the extracellular space after disruption of the cell membrane to induce inflammation and alert the host to injury or damage. In addition to its role as a danger signal, which occurs when the cytokine is passively released by cell necrosis, directly senses DNA damage and acts as signal for genotoxic stress without loss of cell integrity. This is Interleukin-1 alpha (IL1A) from Oryctolagus cuniculus (Rabbit).